We begin with the raw amino-acid sequence, 299 residues long: Pantothenate synthetase (299 aa).

41-48 is a binding site for ATP; sequence MGALHEGH. Residue H48 is the Proton donor of the active site. Q72 serves as a coordination point for (R)-pantoate. Q72 contributes to the beta-alanine binding site. 158 to 161 provides a ligand contact to ATP; sequence GQKD. Q164 lines the (R)-pantoate pocket. Residues V187 and 195-198 each bind ATP; that span reads MSSR.

Belongs to the pantothenate synthetase family. As to quaternary structure, homodimer.

It is found in the cytoplasm. The enzyme catalyses (R)-pantoate + beta-alanine + ATP = (R)-pantothenate + AMP + diphosphate + H(+). It functions in the pathway cofactor biosynthesis; (R)-pantothenate biosynthesis; (R)-pantothenate from (R)-pantoate and beta-alanine: step 1/1. Its function is as follows. Catalyzes the condensation of pantoate with beta-alanine in an ATP-dependent reaction via a pantoyl-adenylate intermediate. The polypeptide is Pantothenate synthetase (Acidobacterium capsulatum (strain ATCC 51196 / DSM 11244 / BCRC 80197 / JCM 7670 / NBRC 15755 / NCIMB 13165 / 161)).